The primary structure comprises 667 residues: Primary amine oxidase (667 aa).

A signal peptide spans Lys1–Ser18. The N-linked (GlcNAc...) asparagine glycan is linked to Asn149. Cys155 and Cys176 are oxidised to a cystine. The segment at Pro216 to Gly246 is disordered. Polar residues predominate over residues Ala218–Ser229. An N-linked (GlcNAc...) asparagine glycan is attached at Asn252. Phe316–Ser327 is a binding site for substrate. Catalysis depends on Asp318, which acts as the Proton acceptor. A disulfide bridge connects residues Cys337 and Cys363. Residue Asn382 is glycosylated (N-linked (GlcNAc...) asparagine). Residue Val402–Asn407 coordinates substrate. Tyr405 (schiff-base intermediate with substrate; via topaquinone) is an active-site residue. 2',4',5'-topaquinone is present on Tyr405. The Cu cation site is built by His460 and His462. Asp469, Phe470, and Asp471 together coordinate Mn(2+). N-linked (GlcNAc...) asparagine glycosylation occurs at Asn576. Asp610 and Ile611 together coordinate Mn(2+). Residue His621 participates in Cu cation binding.

The protein belongs to the copper/topaquinone oxidase family. Homodimer. Cu cation serves as cofactor. Zn(2+) is required as a cofactor. It depends on L-topaquinone as a cofactor. Requires Mn(2+) as cofactor. Glycosylated; contains two carbohydrate chains per monomer. In terms of processing, topaquinone (TPQ) is generated by copper-dependent autoxidation of a specific tyrosyl residue.

It carries out the reaction a primary methyl amine + O2 + H2O = an aldehyde + H2O2 + NH4(+). This Lens culinaris (Lentil) protein is Primary amine oxidase.